Consider the following 74-residue polypeptide: ATP synthase subunit c (74 aa).

Transmembrane regions (helical) follow at residues 5-25 (LAYI…LGVG) and 49-69 (LFIG…VALL).

It belongs to the ATPase C chain family. In terms of assembly, F-type ATPases have 2 components, F(1) - the catalytic core - and F(0) - the membrane proton channel. F(1) has five subunits: alpha(3), beta(3), gamma(1), delta(1), epsilon(1). F(0) has three main subunits: a(1), b(2) and c(10-14). The alpha and beta chains form an alternating ring which encloses part of the gamma chain. F(1) is attached to F(0) by a central stalk formed by the gamma and epsilon chains, while a peripheral stalk is formed by the delta and b chains.

It localises to the cell inner membrane. F(1)F(0) ATP synthase produces ATP from ADP in the presence of a proton or sodium gradient. F-type ATPases consist of two structural domains, F(1) containing the extramembraneous catalytic core and F(0) containing the membrane proton channel, linked together by a central stalk and a peripheral stalk. During catalysis, ATP synthesis in the catalytic domain of F(1) is coupled via a rotary mechanism of the central stalk subunits to proton translocation. Its function is as follows. Key component of the F(0) channel; it plays a direct role in translocation across the membrane. A homomeric c-ring of between 10-14 subunits forms the central stalk rotor element with the F(1) delta and epsilon subunits. The polypeptide is ATP synthase subunit c (Ruegeria sp. (strain TM1040) (Silicibacter sp.)).